Consider the following 639-residue polypeptide: Probable potassium transport system protein Kup 1 (639 aa).

Transmembrane regions (helical) follow at residues Ala-27 to Phe-47, Val-64 to Ile-84, Val-115 to Pro-135, Pro-151 to Ile-171, Phe-182 to Ile-202, Gly-225 to Leu-245, Trp-261 to Leu-281, Leu-293 to Ile-313, Ile-351 to Phe-371, Leu-377 to Phe-397, Ile-408 to Ala-428, and Leu-430 to Ile-450.

Belongs to the HAK/KUP transporter (TC 2.A.72) family.

It localises to the cell inner membrane. It catalyses the reaction K(+)(in) + H(+)(in) = K(+)(out) + H(+)(out). In terms of biological role, transport of potassium into the cell. Likely operates as a K(+):H(+) symporter. The sequence is that of Probable potassium transport system protein Kup 1 from Agrobacterium fabrum (strain C58 / ATCC 33970) (Agrobacterium tumefaciens (strain C58)).